Here is a 517-residue protein sequence, read N- to C-terminus: Endoglycoceramidase (517 aa).

An N-terminal signal peptide occupies residues 1–17; sequence MISVALIILFLAKVISG. Residue Asn-99 is glycosylated (N-linked (GlcNAc...) asparagine). Glu-230 (proton donor) is an active-site residue. Residues Asn-298, Asn-380, and Asn-393 are each glycosylated (N-linked (GlcNAc...) asparagine).

The protein belongs to the glycosyl hydrolase 5 (cellulase A) family. As to expression, expressed uniformly in digestive cells, tentacles and peduncle regions suggesting expression in the endoderm throughout the whole body (at protein level).

It is found in the secreted. It catalyses the reaction an oligoglycosyl-(1-&gt;4)-beta-D-glucosyl-(1&lt;-&gt;1)-ceramide + H2O = an oligoglycosyl-(1-&gt;4)-D-glucose + an N-acyl-sphingoid base. With respect to regulation, cu(2+), zinc, manganese, calcium, magnesium and EDTA have no significant effects on enzyme activity. Enzyme requires presence of detergents such as Triton X-100 and Lubrol PX for the hydrolysis of glycosphingolipids. Taurodeoxycholate strongly inhibits the enzyme activity. Functionally, hydrolysis of the glycosidic linkage between oligosaccharides and ceramides of glycosphingolipids, optimal substrates appear to be the glycosphingolipids with a gangliotetraose structure. This is Endoglycoceramidase from Hydra vulgaris (Hydra).